The following is a 211-amino-acid chain: Endonuclease V (211 aa).

The Mg(2+) site is built by Asp31 and Glu95. The interval 182–211 (IYEVKNTPSPNRSRKKRGNRGKDNNNSQGN) is disordered.

The protein belongs to the endonuclease V family. The cofactor is Mg(2+).

The protein resides in the cytoplasm. It catalyses the reaction Endonucleolytic cleavage at apurinic or apyrimidinic sites to products with a 5'-phosphate.. Its function is as follows. DNA repair enzyme involved in the repair of deaminated bases. Selectively cleaves double-stranded DNA at the second phosphodiester bond 3' to a deoxyinosine leaving behind the intact lesion on the nicked DNA. The polypeptide is Endonuclease V (Pyrococcus horikoshii (strain ATCC 700860 / DSM 12428 / JCM 9974 / NBRC 100139 / OT-3)).